The following is a 402-amino-acid chain: Dynactin subunit 2 (402 aa).

Residues 1–24 (MADPKYADLPGIARNEPDVYETSD) form a disordered region. An N-acetylalanine modification is found at Ala2. Tyr6 is modified (phosphotyrosine). Ser83 carries the post-translational modification Phosphoserine. A Phosphotyrosine modification is found at Tyr86. The stretch at 100–130 (QQKYQRLLHEVQELTTEVEKIKTTVKESATE) forms a coiled coil. Residues Thr134 and Thr199 each carry the phosphothreonine modification. The segment at 185–205 (KSSKGSSGGKSTGGTPPDSSL) is disordered. A coiled-coil region spans residues 215–247 (EQDKFSQAAKVAELEKRLTELEATVRCDQDAQN). Phosphoserine is present on Ser321.

It belongs to the dynactin subunit 2 family. As to quaternary structure, subunit of dynactin, a multiprotein complex part of a tripartite complex with dynein and a adapter, such as BICDL1, BICD2 or HOOK3. The dynactin complex is built around ACTR1A/ACTB filament and consists of an actin-related filament composed of a shoulder domain, a pointed end and a barbed end. Its length is defined by its flexible shoulder domain. The soulder is composed of 2 DCTN1 subunits, 4 DCTN2 and 2 DCTN3. The 4 DCNT2 (via N-terminus) bind the ACTR1A filament and act as molecular rulers to determine the length. The pointed end is important for binding dynein-dynactin cargo adapters and consists of 4 subunits: ACTR10, DCNT4, DCTN5 and DCTN6. The barbed end is composed of a CAPZA1:CAPZB heterodimers, which binds ACTR1A/ACTB filament and dynactin and stabilizes dynactin. Interacts with BICD2 and CEP135. Interacts with DYNAP. Interacts with ECPAS. Interacts with MAPRE1.

The protein localises to the cytoplasm. It localises to the cytoskeleton. The protein resides in the microtubule organizing center. Its subcellular location is the centrosome. It is found in the membrane. Functionally, part of the dynactin complex that activates the molecular motor dynein for ultra-processive transport along microtubules. In the dynactin soulder domain, binds the ACTR1A filament and acts as a molecular ruler to determine the length. Modulates cytoplasmic dynein binding to an organelle, and plays a role in prometaphase chromosome alignment and spindle organization during mitosis. Involved in anchoring microtubules to centrosomes. May play a role in synapse formation during brain development. The sequence is that of Dynactin subunit 2 (Dctn2) from Rattus norvegicus (Rat).